A 260-amino-acid chain; its full sequence is Putative protein phosphatase (260 aa).

Residues 9–254 (FTGLSKKGPV…DNITAALVNL (246 aa)) form the PPM-type phosphatase domain.

It carries out the reaction O-phospho-L-seryl-[protein] + H2O = L-seryl-[protein] + phosphate. The catalysed reaction is O-phospho-L-threonyl-[protein] + H2O = L-threonyl-[protein] + phosphate. This Mycoplasma genitalium (strain ATCC 33530 / DSM 19775 / NCTC 10195 / G37) (Mycoplasmoides genitalium) protein is Putative protein phosphatase.